The chain runs to 406 residues: Putative Bro-N domain-containing protein 019R (406 aa).

One can recognise a Bro-N domain in the interval 4 to 138; it reads LINLKQSREY…QILPSIRKYG (135 aa). 2 coiled-coil regions span residues 141-177 and 343-372; these read QLEMQLTQAMEQLSIKERDVQEAHEARIKAERKAVRV and DSINEKVKQNLEEIVIERKELISKLADKTN.

This sequence belongs to the IIV-6 201R/289L family.

This Invertebrate iridescent virus 3 (IIV-3) protein is Putative Bro-N domain-containing protein 019R.